A 964-amino-acid chain; its full sequence is MDSETDTDTHSICNSVSSGENYKSPESSDCEGYATPLASSLTDISNVINHSVTIKVPDTIADANDLEPGERTPVSTPRAISPPIVKQVMYLQKPRILVMTQREIHEECCSSEEEFYDVDDVQIRDVAQQLLNGVSDDKTETEAGNNDVIIAEEDRADTPIVIEDTREFEETYSEEDERQTPIQMENATSEVSSSEDEISDSVVELTNDMMSKITEIEEIHAQVHSESFGSSDSGDHLEVKSEATNFPEYSNTEEFEVPKNDYVTVENVNESTIDSVVIDSQTPTKDTKNEVNISQNVVNLVRLESHLENYDDETTNTVIAECVYDAQENEKCEKNEEDDLSPVLDSNKIKNSPESKFCEFRAESECYEQTEETDQIKQFVPLMEVSVANQEFDELCDIERNGGNSKDRPKDLNENVKAFDAEHHENSVLEYEQLPDVFSEITIAKTPIPVVHENSISGVSKESQVSFNQEAVQNELMPTHIISDEVETSSTTADNNIPFSDCSTHKVKVDFDGYSSGKEESLSSSTSSESFEFAEPVTENHIQDERAQALRNSIIERYPSNDTDDDELDSVGDEFDEDLLAVKQISAEVEQLVAAINAFGRDEEQQMSAYMVGKKMAAEKKRKSAMDTTAMTSSCQDQTVQTDNNSFILVDRHVPEVMESLQVEIDRLQGDLEKVKSGEKELLQINSKLKEELEESQQTIDGIEIEAEQQYTELTSEIDELCEIVQRKDQELAILKEKVTNVINIENSLKDDVDSQKVIVQRQKEIIENLREELDAITKKLGEVTKLRDKAVEEATLYKMKNMERDRFLSREAQMSMEIEDLQRELNKQKLILNQTSMAKLADTFDRKVLHLENELRERDMLICKQNQIINSHRKSPTGSVITHRKMQPRASVLAAAGNLPSAGSSSESFQNGLDVEAREALLSFILSDRHNQLANIYNIGRILDLTPQEERSVERHLTKDRFT.

2 disordered regions span residues 1 to 31 (MDSE…SDCE) and 169 to 199 (EETY…DEIS). The segment covering 10-27 (HSICNSVSSGENYKSPES) has biased composition (polar residues). A coiled-coil region spans residues 656–840 (EVMESLQVEI…LILNQTSMAK (185 aa)).

This is an uncharacterized protein from Caenorhabditis elegans.